A 72-amino-acid polypeptide reads, in one-letter code: MAKEDVIEVEGVVQETLPNAMFNVELENGHKVLATVSGKIRMHYIRILPGDKVTVELSPYDLTRGRITYRFK.

The 72-residue stretch at 1–72 folds into the S1-like domain; the sequence is MAKEDVIEVE…TRGRITYRFK (72 aa).

This sequence belongs to the IF-1 family. Component of the 30S ribosomal translation pre-initiation complex which assembles on the 30S ribosome in the order IF-2 and IF-3, IF-1 and N-formylmethionyl-tRNA(fMet); mRNA recruitment can occur at any time during PIC assembly.

Its subcellular location is the cytoplasm. One of the essential components for the initiation of protein synthesis. Stabilizes the binding of IF-2 and IF-3 on the 30S subunit to which N-formylmethionyl-tRNA(fMet) subsequently binds. Helps modulate mRNA selection, yielding the 30S pre-initiation complex (PIC). Upon addition of the 50S ribosomal subunit IF-1, IF-2 and IF-3 are released leaving the mature 70S translation initiation complex. The sequence is that of Translation initiation factor IF-1 from Listeria innocua serovar 6a (strain ATCC BAA-680 / CLIP 11262).